The following is a 223-amino-acid chain: MHFLIPAAGSGSRMKAGKNKLLIDLEGESLIYWTLKSVFSASSTNWVGIIGQPKDKNLLLNSTKDFAHKVHWINGGDTRQQSVFNGLKALPKDAEKVLIHDGARCLINPELIDLCAKQLDENEAVILATKVTDTIKIVDNEGFIKETPDRNYLWAAQTPQGFLVDRLKKAHKMAIDKNWNVTDDASLFEMLNWKVKIIEGTYSNIKITSPIDLKIAKLFVKNP.

This sequence belongs to the IspD/TarI cytidylyltransferase family. IspD subfamily.

The enzyme catalyses 2-C-methyl-D-erythritol 4-phosphate + CTP + H(+) = 4-CDP-2-C-methyl-D-erythritol + diphosphate. It participates in isoprenoid biosynthesis; isopentenyl diphosphate biosynthesis via DXP pathway; isopentenyl diphosphate from 1-deoxy-D-xylulose 5-phosphate: step 2/6. Its function is as follows. Catalyzes the formation of 4-diphosphocytidyl-2-C-methyl-D-erythritol from CTP and 2-C-methyl-D-erythritol 4-phosphate (MEP). The polypeptide is 2-C-methyl-D-erythritol 4-phosphate cytidylyltransferase (Prochlorococcus marinus (strain MIT 9301)).